A 345-amino-acid chain; its full sequence is Mitochondrial metalloendopeptidase OMA1 (345 aa).

Topologically, residues 1-67 are mitochondrial matrix; that stretch reads MLRNIIRFKG…ILLDKSSRKY (67 aa). Residues 68–88 traverse the membrane as a helical segment; it reads LALLFGGCSLFYYTHLDKAPV. Topologically, residues 89–345 are mitochondrial intermembrane; the sequence is SDRSRFIWVS…GNYYKSFFSM (257 aa). Histidine 203 is a Zn(2+) binding site. Glutamate 204 is a catalytic residue. Residues histidine 207 and glutamate 257 each coordinate Zn(2+). Cysteine 272 and cysteine 332 are joined by a disulfide. The tract at residues 314–345 is required for protease activation; sequence ENMSKWLPKANEIYEQSDCSSMGNYYKSFFSM.

The protein belongs to the peptidase M48 family. Homooligomer. It depends on Zn(2+) as a cofactor. In terms of processing, forms a redox-dependent disulfide bond, which plays a structural role and regulates its conformational stability and activity.

It is found in the mitochondrion inner membrane. Protease activity is induced in response to various mitochondrial stress, such as changes in membrane potential, oxidative stress or chronic hyperpolarization, and depends on its C-terminal region. Protease that is part of the quality control system in the inner membrane of mitochondria. Activated in response to various mitochondrial stress, leading to the proteolytic cleavage of target proteins, such as OXA1 and COX1. Cleaves and thereby promotes the turnover of mistranslated or misfolded membrane proteins. Cleaves the misfolded multi-pass membrane protein OXA1. Involved in quality control of cytochrome oxidase assembly: mediates the cleavage of COX1 in cells lacking COA2. Required for the stability of the respiratory supercomplexes. Required for TOR signaling. In Saccharomyces cerevisiae (strain ATCC 204508 / S288c) (Baker's yeast), this protein is Mitochondrial metalloendopeptidase OMA1.